Here is a 156-residue protein sequence, read N- to C-terminus: Small ribosomal subunit protein uS7 (156 aa).

Belongs to the universal ribosomal protein uS7 family. In terms of assembly, part of the 30S ribosomal subunit. Contacts proteins S9 and S11.

In terms of biological role, one of the primary rRNA binding proteins, it binds directly to 16S rRNA where it nucleates assembly of the head domain of the 30S subunit. Is located at the subunit interface close to the decoding center, probably blocks exit of the E-site tRNA. In Nitratidesulfovibrio vulgaris (strain ATCC 29579 / DSM 644 / CCUG 34227 / NCIMB 8303 / VKM B-1760 / Hildenborough) (Desulfovibrio vulgaris), this protein is Small ribosomal subunit protein uS7.